The following is a 195-amino-acid chain: Imidazoleglycerol-phosphate dehydratase (195 aa).

This sequence belongs to the imidazoleglycerol-phosphate dehydratase family.

The protein localises to the cytoplasm. The catalysed reaction is D-erythro-1-(imidazol-4-yl)glycerol 3-phosphate = 3-(imidazol-4-yl)-2-oxopropyl phosphate + H2O. It participates in amino-acid biosynthesis; L-histidine biosynthesis; L-histidine from 5-phospho-alpha-D-ribose 1-diphosphate: step 6/9. The polypeptide is Imidazoleglycerol-phosphate dehydratase (Bordetella petrii (strain ATCC BAA-461 / DSM 12804 / CCUG 43448)).